We begin with the raw amino-acid sequence, 215 residues long: uncharacterized protein (215 aa).

Residues Ser-114, Asp-162, and His-194 each act as charge relay system in the active site.

Belongs to the AB hydrolase superfamily. AB hydrolase 2 family.

This is an uncharacterized protein from Rickettsia typhi (strain ATCC VR-144 / Wilmington).